Reading from the N-terminus, the 823-residue chain is Leucine--tRNA ligase (823 aa).

The 'HIGH' region signature appears at 41–51; the sequence is PYPSGTLHVGH. The 'KMSKS' region signature appears at 580-584; that stretch reads KMSKS. Residue Lys-583 coordinates ATP.

This sequence belongs to the class-I aminoacyl-tRNA synthetase family.

It localises to the cytoplasm. The enzyme catalyses tRNA(Leu) + L-leucine + ATP = L-leucyl-tRNA(Leu) + AMP + diphosphate. The sequence is that of Leucine--tRNA ligase from Thermosipho melanesiensis (strain DSM 12029 / CIP 104789 / BI429).